A 95-amino-acid polypeptide reads, in one-letter code: Glutamyl-tRNA(Gln) amidotransferase subunit C 1 (95 aa).

Belongs to the GatC family. As to quaternary structure, heterotrimer of A, B and C subunits.

It carries out the reaction L-glutamyl-tRNA(Gln) + L-glutamine + ATP + H2O = L-glutaminyl-tRNA(Gln) + L-glutamate + ADP + phosphate + H(+). The enzyme catalyses L-aspartyl-tRNA(Asn) + L-glutamine + ATP + H2O = L-asparaginyl-tRNA(Asn) + L-glutamate + ADP + phosphate + 2 H(+). Its function is as follows. Allows the formation of correctly charged Asn-tRNA(Asn) or Gln-tRNA(Gln) through the transamidation of misacylated Asp-tRNA(Asn) or Glu-tRNA(Gln) in organisms which lack either or both of asparaginyl-tRNA or glutaminyl-tRNA synthetases. The reaction takes place in the presence of glutamine and ATP through an activated phospho-Asp-tRNA(Asn) or phospho-Glu-tRNA(Gln). This Clostridium acetobutylicum (strain ATCC 824 / DSM 792 / JCM 1419 / IAM 19013 / LMG 5710 / NBRC 13948 / NRRL B-527 / VKM B-1787 / 2291 / W) protein is Glutamyl-tRNA(Gln) amidotransferase subunit C 1 (gatC1).